Here is a 207-residue protein sequence, read N- to C-terminus: MAEYTLPDLDWDYAALEPHISGEINEIHHTKHHAAYVKGVNDALAKLDEARAKDDHSAIFLNEKNLAFHLGGHVNHSIWWKNLSPNGGDKPTGGLATDIDETFGSFDKFRAQFSAAANGLQGSGWAVLGYDTLGNKLLTFQLYDQQANVSLGIIPLLQVDMWEHAFYLQYKNVKADYVKAFWNVVNWADVQSRYMAATSKTQGLIFD.

4 residues coordinate Mn(2+): His28, His76, Asp160, and His164.

This sequence belongs to the iron/manganese superoxide dismutase family. Mn(2+) is required as a cofactor.

It carries out the reaction 2 superoxide + 2 H(+) = H2O2 + O2. Its function is as follows. Destroys superoxide anion radicals which are normally produced within the cells and which are toxic to biological systems. The chain is Superoxide dismutase [Mn] (sodA) from Mycobacterium leprae (strain TN).